A 637-amino-acid chain; its full sequence is Chaperone protein HtpG (637 aa).

Residues 1 to 335 (MQGTVNSERL…SSDLPLNISR (335 aa)) form an a; substrate-binding region. Residues 336–559 (ETLQNNKIIE…DGSMDIRMER (224 aa)) are b. Positions 560–637 (FLREQKQLNY…RMNSVLSQIN (78 aa)) are c.

The protein belongs to the heat shock protein 90 family. Homodimer.

It localises to the cytoplasm. Molecular chaperone. Has ATPase activity. The chain is Chaperone protein HtpG from Ehrlichia ruminantium (strain Gardel).